We begin with the raw amino-acid sequence, 349 residues long: Cobalt-precorrin-5B C(1)-methyltransferase (349 aa).

The protein belongs to the CbiD family.

The catalysed reaction is Co-precorrin-5B + S-adenosyl-L-methionine = Co-precorrin-6A + S-adenosyl-L-homocysteine. It functions in the pathway cofactor biosynthesis; adenosylcobalamin biosynthesis; cob(II)yrinate a,c-diamide from sirohydrochlorin (anaerobic route): step 6/10. Functionally, catalyzes the methylation of C-1 in cobalt-precorrin-5B to form cobalt-precorrin-6A. This chain is Cobalt-precorrin-5B C(1)-methyltransferase, found in Saccharolobus solfataricus (strain ATCC 35092 / DSM 1617 / JCM 11322 / P2) (Sulfolobus solfataricus).